A 126-amino-acid polypeptide reads, in one-letter code: Aspartate 1-decarboxylase (126 aa).

Ser-25 (schiff-base intermediate with substrate; via pyruvic acid) is an active-site residue. Ser-25 is subject to Pyruvic acid (Ser). Thr-57 provides a ligand contact to substrate. The active-site Proton donor is Tyr-58. 73-75 provides a ligand contact to substrate; it reads GAA.

This sequence belongs to the PanD family. Heterooctamer of four alpha and four beta subunits. The cofactor is pyruvate. In terms of processing, is synthesized initially as an inactive proenzyme, which is activated by self-cleavage at a specific serine bond to produce a beta-subunit with a hydroxyl group at its C-terminus and an alpha-subunit with a pyruvoyl group at its N-terminus.

Its subcellular location is the cytoplasm. It catalyses the reaction L-aspartate + H(+) = beta-alanine + CO2. The protein operates within cofactor biosynthesis; (R)-pantothenate biosynthesis; beta-alanine from L-aspartate: step 1/1. Catalyzes the pyruvoyl-dependent decarboxylation of aspartate to produce beta-alanine. The sequence is that of Aspartate 1-decarboxylase from Alkalilimnicola ehrlichii (strain ATCC BAA-1101 / DSM 17681 / MLHE-1).